The following is a 285-amino-acid chain: Non-structural protein 3c (285 aa).

In Bat coronavirus 133/2005 (BtCoV), this protein is Non-structural protein 3c.